Reading from the N-terminus, the 185-residue chain is Transcription factor bHLH109 (185 aa).

The bHLH domain occupies 67 to 117 (RSMEYRMMMEKKRRKEIKDKVDILQGLMPNHCTKPDLASKLENIIEYIKSL).

This sequence belongs to the bHLH protein family. Homodimer.

It localises to the nucleus. In terms of biological role, transcription factor involved in somatic embryogenesis. Acts as a positive regulator of somatic embryo formation. Acts as a positive regulator of ECP63 by targeting its promoter and inducing its expression. The sequence is that of Transcription factor bHLH109 (BHLH109) from Arabidopsis thaliana (Mouse-ear cress).